Here is a 217-residue protein sequence, read N- to C-terminus: MTRTKICGITRLNDALHASSEGVDALGFNFSRKSPRSITPSAAKKIIDELPPFVSKVGIFVEQSPAEIADICSYSKIAVAQLHSERYSAADARFLKDMVHVIRVFRPDGSFSPQSLTPFAEESGVRTFLFDAYKEGMEGGTGEEIETSVARQIFPAEGAPFFRVLAGGLNPGNVAEAIRQFRPYGVDTASGVEAKPGIKDPEKISAFLLAVRLANQP.

Belongs to the TrpF family.

The catalysed reaction is N-(5-phospho-beta-D-ribosyl)anthranilate = 1-(2-carboxyphenylamino)-1-deoxy-D-ribulose 5-phosphate. Its pathway is amino-acid biosynthesis; L-tryptophan biosynthesis; L-tryptophan from chorismate: step 3/5. In Chlorobium phaeovibrioides (strain DSM 265 / 1930) (Prosthecochloris vibrioformis (strain DSM 265)), this protein is N-(5'-phosphoribosyl)anthranilate isomerase.